A 369-amino-acid polypeptide reads, in one-letter code: MFCCLGYEWLSGGCTTWHSAWVINTLADHRHRGTDFGGSPWLLIITVFLRSYKFAISLCTSYLCVSFLKTIFPSQNGHDGSTDVQQRARRSNRRRQEGIKIVLEDIFTLWRQVETKVRAKIRKMKVTTKVNRHDKINGKRKTAKEHLRKLSMKEREHREEERQVSEAEENGKLDMKEIHTYMEMFQRAQALRRRAEDYYRCKITPSARKPLCNRVRMAAVEHRHSSGLPYWPYLTAETLKNRMGHQPPPPTQQHSIIDNSLSLKTPSECVLYPLPPSADDNLKTPPECLLTPLPPSALPSADDNLKTPAECLLYPLPPSADDNLKTPPECLLTPLPPSAPPSADDNLKTPPECVCSLPFHPQRMIISRN.

The segment at 151–171 (SMKEREHREEERQVSEAEENG) is disordered.

Belongs to the NPIP family.

This Homo sapiens (Human) protein is Nuclear pore complex-interacting protein family member A7 (NPIPA7).